Reading from the N-terminus, the 158-residue chain is 6,7-dimethyl-8-ribityllumazine synthase (158 aa).

5-amino-6-(D-ribitylamino)uracil is bound by residues F22, 57–59, and 81–83; these read AVE and AVI. Position 86–87 (86–87) interacts with (2S)-2-hydroxy-3-oxobutyl phosphate; the sequence is GT. The active-site Proton donor is H89. F114 is a 5-amino-6-(D-ribitylamino)uracil binding site. R128 provides a ligand contact to (2S)-2-hydroxy-3-oxobutyl phosphate.

The protein belongs to the DMRL synthase family. Forms an icosahedral capsid composed of 60 subunits, arranged as a dodecamer of pentamers.

The catalysed reaction is (2S)-2-hydroxy-3-oxobutyl phosphate + 5-amino-6-(D-ribitylamino)uracil = 6,7-dimethyl-8-(1-D-ribityl)lumazine + phosphate + 2 H2O + H(+). It functions in the pathway cofactor biosynthesis; riboflavin biosynthesis; riboflavin from 2-hydroxy-3-oxobutyl phosphate and 5-amino-6-(D-ribitylamino)uracil: step 1/2. Its function is as follows. Catalyzes the formation of 6,7-dimethyl-8-ribityllumazine by condensation of 5-amino-6-(D-ribitylamino)uracil with 3,4-dihydroxy-2-butanone 4-phosphate. This is the penultimate step in the biosynthesis of riboflavin. The sequence is that of 6,7-dimethyl-8-ribityllumazine synthase from Shewanella halifaxensis (strain HAW-EB4).